The chain runs to 1372 residues: DNA-directed RNA polymerase subunit beta (1372 aa).

The protein belongs to the RNA polymerase beta chain family. In terms of assembly, the RNAP catalytic core consists of 2 alpha, 1 beta, 1 beta' and 1 omega subunit. When a sigma factor is associated with the core the holoenzyme is formed, which can initiate transcription.

The catalysed reaction is RNA(n) + a ribonucleoside 5'-triphosphate = RNA(n+1) + diphosphate. In terms of biological role, DNA-dependent RNA polymerase catalyzes the transcription of DNA into RNA using the four ribonucleoside triphosphates as substrates. This chain is DNA-directed RNA polymerase subunit beta, found in Rickettsia bellii (strain RML369-C).